The primary structure comprises 221 residues: Large ribosomal subunit protein uL16A (221 aa).

This sequence belongs to the universal ribosomal protein uL16 family. In terms of assembly, component of the large ribosomal subunit (LSU). Mature yeast ribosomes consist of a small (40S) and a large (60S) subunit. The 40S small subunit contains 1 molecule of ribosomal RNA (18S rRNA) and at least 33 different proteins. The large 60S subunit contains 3 rRNA molecules (25S, 5.8S and 5S rRNA) and at least 46 different proteins.

Its subcellular location is the cytoplasm. Component of the ribosome, a large ribonucleoprotein complex responsible for the synthesis of proteins in the cell. The small ribosomal subunit (SSU) binds messenger RNAs (mRNAs) and translates the encoded message by selecting cognate aminoacyl-transfer RNA (tRNA) molecules. The large subunit (LSU) contains the ribosomal catalytic site termed the peptidyl transferase center (PTC), which catalyzes the formation of peptide bonds, thereby polymerizing the amino acids delivered by tRNAs into a polypeptide chain. The nascent polypeptides leave the ribosome through a tunnel in the LSU and interact with protein factors that function in enzymatic processing, targeting, and the membrane insertion of nascent chains at the exit of the ribosomal tunnel. This chain is Large ribosomal subunit protein uL16A (rpl1001), found in Schizosaccharomyces pombe (strain 972 / ATCC 24843) (Fission yeast).